The primary structure comprises 175 residues: Large ribosomal subunit protein eL14 (175 aa).

The interval 150-175 (KAAKMDSTEGAKRRMQKAIAARKAKK) is disordered. The segment covering 152-161 (AKMDSTEGAK) has biased composition (basic and acidic residues). Basic residues predominate over residues 162-175 (RRMQKAIAARKAKK).

The protein belongs to the eukaryotic ribosomal protein eL14 family.

Functionally, component of the large ribosomal subunit. The ribosome is a large ribonucleoprotein complex responsible for the synthesis of proteins in the cell. The polypeptide is Large ribosomal subunit protein eL14 (RPL14) (Leishmania donovani).